Consider the following 93-residue polypeptide: HssA/B-like protein 26 (93 aa).

It belongs to the hssA/B family.

The chain is HssA/B-like protein 26 (hssl26) from Dictyostelium discoideum (Social amoeba).